The sequence spans 475 residues: Exodeoxyribonuclease I (475 aa).

An Exonuclease domain is found at 13–192; sequence FHDYETFGTH…AMADVYATIA (180 aa). Residues aspartate 15 and glutamate 17 each contribute to the Mg(2+) site. Positions 17 and 165 each coordinate substrate. A Mg(2+)-binding site is contributed by aspartate 186. Positions 202–355 constitute an ExoI SH3-like domain; that stretch reads PRLFDYLFTH…KVVAIFAEAE (154 aa). The 118-residue stretch at 358-475 folds into the ExoI C-terminal domain; sequence TPSDNVDAQL…ALWQYAEEIV (118 aa).

Monomer. Interacts with ssb (via C-terminus); this interaction stimulates the exonuclease activity by recruiting the enzyme to its substrate. Mg(2+) serves as cofactor.

The catalysed reaction is Exonucleolytic cleavage in the 3'- to 5'-direction to yield nucleoside 5'-phosphates.. Inhibited by 10 mM EDTA. Its function is as follows. Degrades single-stranded DNA (ssDNA) in a highly processive manner. Also functions as a DNA deoxyribophosphodiesterase that releases deoxyribose-phosphate moieties following the cleavage of DNA at an apurinic/apyrimidinic (AP) site by either an AP endonuclease or AP lyase. This Escherichia coli (strain K12) protein is Exodeoxyribonuclease I (sbcB).